Reading from the N-terminus, the 113-residue chain is UPF0416 protein RF_0879 (113 aa).

This sequence belongs to the UPF0416 family.

This is UPF0416 protein RF_0879 from Rickettsia felis (strain ATCC VR-1525 / URRWXCal2) (Rickettsia azadi).